The primary structure comprises 735 residues: Catalase-peroxidase (735 aa).

A cross-link (tryptophyl-tyrosyl-methioninium (Trp-Tyr) (with M-246)) is located at residues 97-220 (WHAAGTYRIG…LAAVQMGLIY (124 aa)). H98 serves as the catalytic Proton acceptor. The tryptophyl-tyrosyl-methioninium (Tyr-Met) (with W-97) cross-link spans 220 to 246 (YVNPEGPNGKPDPMAAAHDIRETFGRM). H261 is a heme b binding site. The interval 342–362 (AHQWTPKNPEAASTVPDAHDP) is disordered.

Belongs to the peroxidase family. Peroxidase/catalase subfamily. Homodimer or homotetramer. The cofactor is heme b. In terms of processing, formation of the three residue Trp-Tyr-Met cross-link is important for the catalase, but not the peroxidase activity of the enzyme.

It catalyses the reaction H2O2 + AH2 = A + 2 H2O. The catalysed reaction is 2 H2O2 = O2 + 2 H2O. Bifunctional enzyme with both catalase and broad-spectrum peroxidase activity. The sequence is that of Catalase-peroxidase from Gloeobacter violaceus (strain ATCC 29082 / PCC 7421).